Consider the following 152-residue polypeptide: 3-dehydroquinate dehydratase (152 aa).

The active-site Proton acceptor is the tyrosine 26. Substrate is bound by residues asparagine 77, histidine 83, and aspartate 90. The active-site Proton donor is the histidine 103. Residues 104–105 (LS) and arginine 114 contribute to the substrate site.

Belongs to the type-II 3-dehydroquinase family. Homododecamer.

The enzyme catalyses 3-dehydroquinate = 3-dehydroshikimate + H2O. It functions in the pathway metabolic intermediate biosynthesis; chorismate biosynthesis; chorismate from D-erythrose 4-phosphate and phosphoenolpyruvate: step 3/7. In terms of biological role, catalyzes a trans-dehydration via an enolate intermediate. The chain is 3-dehydroquinate dehydratase from Tolumonas auensis (strain DSM 9187 / NBRC 110442 / TA 4).